The sequence spans 179 residues: Large ribosomal subunit protein uL5 (179 aa).

It belongs to the universal ribosomal protein uL5 family. In terms of assembly, part of the 50S ribosomal subunit; part of the 5S rRNA/L5/L18/L25 subcomplex. Contacts the 5S rRNA and the P site tRNA. Forms a bridge to the 30S subunit in the 70S ribosome.

This is one of the proteins that bind and probably mediate the attachment of the 5S RNA into the large ribosomal subunit, where it forms part of the central protuberance. In the 70S ribosome it contacts protein S13 of the 30S subunit (bridge B1b), connecting the 2 subunits; this bridge is implicated in subunit movement. Contacts the P site tRNA; the 5S rRNA and some of its associated proteins might help stabilize positioning of ribosome-bound tRNAs. The chain is Large ribosomal subunit protein uL5 from Histophilus somni (strain 129Pt) (Haemophilus somnus).